The chain runs to 1203 residues: Serine/threonine-protein kinase Nek1 (1203 aa).

Residues 4 to 258 (YVRLQKIGEG…VNSILEKGFI (255 aa)) enclose the Protein kinase domain. ATP is bound by residues 10 to 18 (IGEGSFGKA) and Lys33. Asp128 acts as the Proton acceptor in catalysis. At Thr156 the chain carries Phosphothreonine. The residue at position 162 (Thr162) is a Phosphothreonine; by autocatalysis. The interval 329–357 (LLEKKPPPKHKQAHQIPVKKMNSGEERKK) is disordered. A phosphoserine mark is found at Ser417 and Ser437. Thr615 is modified (phosphothreonine). At Ser618 the chain carries Phosphoserine. Disordered regions lie at residues 643–662 (LTDT…SSKR) and 674–708 (AQED…ISSD). A compositionally biased stretch (basic and acidic residues) spans 674–683 (AQEDEKEKQH). Ser750, Ser786, Ser820, and Ser832 each carry phosphoserine. Disordered regions lie at residues 814–866 (PSAT…LPPV) and 888–925 (AVQQ…GCDV). Positions 839–850 (NVEEPDDLETEV) are enriched in acidic residues. Phosphoserine is present on Ser997. Disordered regions lie at residues 1021 to 1045 (SLEI…TVFE) and 1063 to 1120 (REQP…ETTS). Ser1071 bears the Phosphoserine mark.

Belongs to the protein kinase superfamily. NEK Ser/Thr protein kinase family. NIMA subfamily. Binds to CBY2. Found in a complex with CFAP410, NEK1 and SPATA7. Interacts with CFAP410. Interacts (via Ser-997 phosphorylated form) with 14-3-3 proteins. The cofactor is Mg(2+). Predominantly in testes (germ cells and Sertoli cells). Lower levels in ovary (oocytes and granulosa cells), thymus and lung.

The protein resides in the nucleus. The protein localises to the cytoplasm. It is found in the cytoskeleton. It localises to the microtubule organizing center. Its subcellular location is the centrosome. It catalyses the reaction L-seryl-[protein] + ATP = O-phospho-L-seryl-[protein] + ADP + H(+). It carries out the reaction L-threonyl-[protein] + ATP = O-phospho-L-threonyl-[protein] + ADP + H(+). Phosphorylates serines and threonines, but also appears to possess tyrosine kinase activity. Involved in DNA damage checkpoint control and for proper DNA damage repair. In response to injury that includes DNA damage, NEK1 phosphorylates VDAC1 to limit mitochondrial cell death. May be implicated in the control of meiosis. Involved in cilium assembly. The polypeptide is Serine/threonine-protein kinase Nek1 (Nek1) (Mus musculus (Mouse)).